The following is a 369-amino-acid chain: MALVQRIPISSSSIRNWQQARTNLTPICCLHYNTASSSSSPFTEKHSVERYQRDQWLYKAVEPTPPSTPSPSPFEDEVFVRENDIASQLPELKKLLAVLKEKRVKGCKGGDCGPGDVYLVGTGPGDPELLTLKAVRVIQSADLLLYDRLVSNDVLELVAPDARLLYVGKTAGYHSRTQEEIHELLLNFAEAGATVVRLKGGDPLVFGRGGEEMDFLQQQGIRVQVIPGITAASGIAAELGIPLTHRGVATSVRFLTGHSRKGGTDPLFVAENAADPDTTLVVYMGLGTLPSLAQKLMDHGLPSDTPAVAVERGTTPLQRTVFAELKDFATEIQSAGLVSPTLIIIGKVVELSPLWPHCTKESSCLVETR.

The transit peptide at 1–28 (MALVQRIPISSSSIRNWQQARTNLTPIC) directs the protein to the chloroplast. S-adenosyl-L-homocysteine is bound by residues Pro124, 200–202 (GGD), 230–231 (TA), Met284, and Thr341.

This sequence belongs to the precorrin methyltransferase family. In terms of tissue distribution, mostly expressed in leaves, and, to a lower extent, in stems, flowers and siliques.

The protein resides in the plastid. Its subcellular location is the chloroplast. It carries out the reaction uroporphyrinogen III + 2 S-adenosyl-L-methionine = precorrin-2 + 2 S-adenosyl-L-homocysteine + H(+). It functions in the pathway porphyrin-containing compound metabolism; siroheme biosynthesis; precorrin-2 from uroporphyrinogen III: step 1/1. Functionally, essential protein required for siroheme biosynthesis. Catalyzes the two successive C-2 and C-7 methylation reactions involved in the conversion of uroporphyrinogen III to precorrin-2 via the intermediate formation of precorrin-1. It is a step in the biosynthesis of siroheme. Promotes nitrogen and sulfur assimilation as well as photosynthesis efficiency by triggering chlorophyll, nitrite reductase (NiR) and sulfite reductase (SiR) biosynthesis. The chain is S-adenosyl-L-methionine-dependent uroporphyrinogen III methyltransferase, chloroplastic from Arabidopsis thaliana (Mouse-ear cress).